Here is a 360-residue protein sequence, read N- to C-terminus: Histidinol-phosphate aminotransferase (360 aa).

Lys222 is modified (N6-(pyridoxal phosphate)lysine).

This sequence belongs to the class-II pyridoxal-phosphate-dependent aminotransferase family. Histidinol-phosphate aminotransferase subfamily. Homodimer. Pyridoxal 5'-phosphate serves as cofactor.

The enzyme catalyses L-histidinol phosphate + 2-oxoglutarate = 3-(imidazol-4-yl)-2-oxopropyl phosphate + L-glutamate. It functions in the pathway amino-acid biosynthesis; L-histidine biosynthesis; L-histidine from 5-phospho-alpha-D-ribose 1-diphosphate: step 7/9. This Listeria monocytogenes serotype 4b (strain F2365) protein is Histidinol-phosphate aminotransferase.